Reading from the N-terminus, the 490-residue chain is Aspartyl/glutamyl-tRNA(Asn/Gln) amidotransferase subunit B (490 aa).

The protein belongs to the GatB/GatE family. GatB subfamily. In terms of assembly, heterotrimer of A, B and C subunits.

It catalyses the reaction L-glutamyl-tRNA(Gln) + L-glutamine + ATP + H2O = L-glutaminyl-tRNA(Gln) + L-glutamate + ADP + phosphate + H(+). The enzyme catalyses L-aspartyl-tRNA(Asn) + L-glutamine + ATP + H2O = L-asparaginyl-tRNA(Asn) + L-glutamate + ADP + phosphate + 2 H(+). In terms of biological role, allows the formation of correctly charged Asn-tRNA(Asn) or Gln-tRNA(Gln) through the transamidation of misacylated Asp-tRNA(Asn) or Glu-tRNA(Gln) in organisms which lack either or both of asparaginyl-tRNA or glutaminyl-tRNA synthetases. The reaction takes place in the presence of glutamine and ATP through an activated phospho-Asp-tRNA(Asn) or phospho-Glu-tRNA(Gln). This chain is Aspartyl/glutamyl-tRNA(Asn/Gln) amidotransferase subunit B, found in Methylobacterium nodulans (strain LMG 21967 / CNCM I-2342 / ORS 2060).